Here is a 286-residue protein sequence, read N- to C-terminus: Haloalkane dehalogenase 2 (286 aa).

An AB hydrolase-1 domain is found at proline 35 to threonine 134. Aspartate 109 (nucleophile) is an active-site residue. The Proton donor role is filled by aspartate 238. Histidine 267 functions as the Proton acceptor in the catalytic mechanism.

It belongs to the haloalkane dehalogenase family. Type 1 subfamily. In terms of assembly, monomer.

It catalyses the reaction 1-haloalkane + H2O = a halide anion + a primary alcohol + H(+). Functionally, catalyzes hydrolytic cleavage of carbon-halogen bonds in halogenated aliphatic compounds, leading to the formation of the corresponding primary alcohols, halide ions and protons. This Mycobacterium bovis (strain ATCC BAA-935 / AF2122/97) protein is Haloalkane dehalogenase 2 (dhmA2).